Consider the following 400-residue polypeptide: Acetate kinase (400 aa).

Position 10 (Asn-10) interacts with Mg(2+). Lys-17 provides a ligand contact to ATP. Arg-91 contributes to the substrate binding site. Asp-150 functions as the Proton donor/acceptor in the catalytic mechanism. ATP-binding positions include 210 to 214 (HLGNG), 285 to 287 (DCR), and 333 to 337 (GIGEN). Glu-387 is a Mg(2+) binding site.

Belongs to the acetokinase family. In terms of assembly, homodimer. Requires Mg(2+) as cofactor. Mn(2+) serves as cofactor.

The protein localises to the cytoplasm. It carries out the reaction acetate + ATP = acetyl phosphate + ADP. The protein operates within metabolic intermediate biosynthesis; acetyl-CoA biosynthesis; acetyl-CoA from acetate: step 1/2. Catalyzes the formation of acetyl phosphate from acetate and ATP. Can also catalyze the reverse reaction. The protein is Acetate kinase of Yersinia pseudotuberculosis serotype IB (strain PB1/+).